Here is a 239-residue protein sequence, read N- to C-terminus: Cysteine-rich venom protein 2 (239 aa).

Positions 1–19 (MIALIVLPILAAVLQQSSG) are cleaved as a signal peptide. Residues 38 to 166 (VDLHNSLRRS…EYSYFYVCQY (129 aa)) enclose the SCP domain. Cystine bridges form between Cys75–Cys153, Cys92–Cys167, Cys148–Cys164, Cys186–Cys193, Cys189–Cys198, Cys202–Cys234, and Cys219–Cys232. The ShKT domain maps to 198–234 (CTNPCPKKISTQLPRFGPQAGCQDKQMQSDCSATCFC).

Belongs to the CRISP family. Expressed by the venom gland.

The protein resides in the secreted. Its function is as follows. Weakly blocks contraction of smooth muscle elicited by high potassium-induced depolarization, but does not block caffeine-stimulated contraction. May target voltage-gated calcium channels on smooth muscle. This Sistrurus catenatus edwardsii (Desert massasauga) protein is Cysteine-rich venom protein 2.